Reading from the N-terminus, the 63-residue chain is uncharacterized protein (63 aa).

A helical membrane pass occupies residues 37-57; that stretch reads IFFPTTFDVLLLAILIFLACA.

Its subcellular location is the cell membrane. This is an uncharacterized protein from Bacillus subtilis (strain 168).